The chain runs to 130 residues: DNA-directed RNA polymerase subunit omega (130 aa).

Residues 109 to 130 are disordered; sequence EEELLKGLEGLAPPEEQPEEDE.

This sequence belongs to the RNA polymerase subunit omega family. In terms of assembly, the RNAP catalytic core consists of 2 alpha, 1 beta, 1 beta' and 1 omega subunit. When a sigma factor is associated with the core the holoenzyme is formed, which can initiate transcription.

It carries out the reaction RNA(n) + a ribonucleoside 5'-triphosphate = RNA(n+1) + diphosphate. In terms of biological role, promotes RNA polymerase assembly. Latches the N- and C-terminal regions of the beta' subunit thereby facilitating its interaction with the beta and alpha subunits. The protein is DNA-directed RNA polymerase subunit omega of Rhodopseudomonas palustris (strain BisB5).